A 228-amino-acid chain; its full sequence is NAD(P)H-hydrate epimerase (228 aa).

One can recognise a YjeF N-terminal domain in the interval 9–214 (AQNIDQELFN…DLLLKKYELE (206 aa)). A (6S)-NADPHX-binding site is contributed by 60–64 (NNGGD). Positions 61 and 125 each coordinate K(+). Residues 129–135 (GFSFKGE) and D158 each bind (6S)-NADPHX. S161 provides a ligand contact to K(+).

The protein belongs to the NnrE/AIBP family. The cofactor is K(+).

The enzyme catalyses (6R)-NADHX = (6S)-NADHX. The catalysed reaction is (6R)-NADPHX = (6S)-NADPHX. In terms of biological role, catalyzes the epimerization of the S- and R-forms of NAD(P)HX, a damaged form of NAD(P)H that is a result of enzymatic or heat-dependent hydration. This is a prerequisite for the S-specific NAD(P)H-hydrate dehydratase to allow the repair of both epimers of NAD(P)HX. The sequence is that of NAD(P)H-hydrate epimerase from Nematostella vectensis (Starlet sea anemone).